The primary structure comprises 305 residues: Methionyl-tRNA formyltransferase (305 aa).

A (6S)-5,6,7,8-tetrahydrofolate-binding site is contributed by 108-111 (SLLP).

The protein belongs to the Fmt family.

It carries out the reaction L-methionyl-tRNA(fMet) + (6R)-10-formyltetrahydrofolate = N-formyl-L-methionyl-tRNA(fMet) + (6S)-5,6,7,8-tetrahydrofolate + H(+). Functionally, attaches a formyl group to the free amino group of methionyl-tRNA(fMet). The formyl group appears to play a dual role in the initiator identity of N-formylmethionyl-tRNA by promoting its recognition by IF2 and preventing the misappropriation of this tRNA by the elongation apparatus. In Thermus thermophilus (strain ATCC 27634 / DSM 579 / HB8), this protein is Methionyl-tRNA formyltransferase.